Consider the following 230-residue polypeptide: Ribose-5-phosphate isomerase A (230 aa).

Substrate is bound by residues Thr29–Thr32, Asp85–Asp88, and Lys99–Gly102. The active-site Proton acceptor is the Glu108. Position 126 (Lys126) interacts with substrate.

Belongs to the ribose 5-phosphate isomerase family. Homodimer.

It carries out the reaction aldehydo-D-ribose 5-phosphate = D-ribulose 5-phosphate. It participates in carbohydrate degradation; pentose phosphate pathway; D-ribose 5-phosphate from D-ribulose 5-phosphate (non-oxidative stage): step 1/1. Catalyzes the reversible conversion of ribose-5-phosphate to ribulose 5-phosphate. The polypeptide is Ribose-5-phosphate isomerase A (Synechococcus sp. (strain JA-3-3Ab) (Cyanobacteria bacterium Yellowstone A-Prime)).